The primary structure comprises 307 residues: Taste receptor type 2 member 10 (307 aa).

Residues 1 to 6 (MLRVVE) lie on the Extracellular side of the membrane. Residues 7–27 (GIFIFVVVSESVFGVLGNGFI) traverse the membrane as a helical segment. The Cytoplasmic portion of the chain corresponds to 28–42 (GLVNCIDCAKNKLST). A helical transmembrane segment spans residues 43–63 (IGFILTGLAISRIFLIWIIIT). At 64-100 (DGFIQIFSPNIYASGNLIEYISYFWVIGNQSSMWFAT) the chain is on the extracellular side. A glycan (N-linked (GlcNAc...) asparagine) is linked at Asn92. The chain crosses the membrane as a helical span at residues 101–121 (SLSIFYFLKIANFSNYIFLWL). The Cytoplasmic portion of the chain corresponds to 122 to 126 (KSRTN). Residues 127–147 (MVLPFMIVFLLISSLLNFAYI) traverse the membrane as a helical segment. Over 148–179 (AKILNDYKTKNDTVWDLNMYKSEYFIKQILLN) the chain is Extracellular. Residue Asn158 is glycosylated (N-linked (GlcNAc...) asparagine). Residues 180-200 (LGVIFFFTLSLITCIFLIISL) form a helical membrane-spanning segment. Residues 201–227 (WRHNRQMQSNVTGLRDSNTEAHVKAMK) are Cytoplasmic-facing. A helical transmembrane segment spans residues 228–248 (VLISFIILFILYFIGMAIEIS). Over 249–257 (CFTVRENKL) the chain is Extracellular. A helical membrane pass occupies residues 258–278 (LLMFGMTTTAIYPWGHSFILI). Residues 279–307 (LGNSKLKQASLRVLQQLKCCEKRKNLRVT) lie on the Cytoplasmic side of the membrane.

It belongs to the G-protein coupled receptor T2R family. As to expression, expressed in subsets of taste receptor cells of the tongue and palate epithelium and exclusively in gustducin-positive cells.

Its subcellular location is the membrane. Its function is as follows. Gustducin-coupled strychnine receptor implicated in the perception of bitter compounds in the oral cavity and the gastrointestinal tract. Signals through PLCB2 and the calcium-regulated cation channel TRPM5. The chain is Taste receptor type 2 member 10 (TAS2R10) from Homo sapiens (Human).